Here is a 251-residue protein sequence, read N- to C-terminus: Ubiquinone/menaquinone biosynthesis C-methyltransferase UbiE (251 aa).

Residues threonine 74, aspartate 95, 123 to 124 (NA), and serine 140 contribute to the S-adenosyl-L-methionine site.

The protein belongs to the class I-like SAM-binding methyltransferase superfamily. MenG/UbiE family.

The catalysed reaction is a 2-demethylmenaquinol + S-adenosyl-L-methionine = a menaquinol + S-adenosyl-L-homocysteine + H(+). It catalyses the reaction a 2-methoxy-6-(all-trans-polyprenyl)benzene-1,4-diol + S-adenosyl-L-methionine = a 5-methoxy-2-methyl-3-(all-trans-polyprenyl)benzene-1,4-diol + S-adenosyl-L-homocysteine + H(+). It functions in the pathway quinol/quinone metabolism; menaquinone biosynthesis; menaquinol from 1,4-dihydroxy-2-naphthoate: step 2/2. Its pathway is cofactor biosynthesis; ubiquinone biosynthesis. In terms of biological role, methyltransferase required for the conversion of demethylmenaquinol (DMKH2) to menaquinol (MKH2) and the conversion of 2-polyprenyl-6-methoxy-1,4-benzoquinol (DDMQH2) to 2-polyprenyl-3-methyl-6-methoxy-1,4-benzoquinol (DMQH2). In Yersinia pestis bv. Antiqua (strain Angola), this protein is Ubiquinone/menaquinone biosynthesis C-methyltransferase UbiE.